We begin with the raw amino-acid sequence, 292 residues long: Ribosomal RNA small subunit methyltransferase A (292 aa).

Residues N28, L30, G55, E76, D101, and N126 each contribute to the S-adenosyl-L-methionine site.

Belongs to the class I-like SAM-binding methyltransferase superfamily. rRNA adenine N(6)-methyltransferase family. RsmA subfamily.

Its subcellular location is the cytoplasm. The catalysed reaction is adenosine(1518)/adenosine(1519) in 16S rRNA + 4 S-adenosyl-L-methionine = N(6)-dimethyladenosine(1518)/N(6)-dimethyladenosine(1519) in 16S rRNA + 4 S-adenosyl-L-homocysteine + 4 H(+). Specifically dimethylates two adjacent adenosines (A1518 and A1519) in the loop of a conserved hairpin near the 3'-end of 16S rRNA in the 30S particle. May play a critical role in biogenesis of 30S subunits. The polypeptide is Ribosomal RNA small subunit methyltransferase A (Bacillus cytotoxicus (strain DSM 22905 / CIP 110041 / 391-98 / NVH 391-98)).